The chain runs to 65 residues: U2-theraphotoxin-Pc1a (65 aa).

A signal peptide spans 1-20 (MGFKLVLFIAVLTLVGSSNA). A propeptide spanning residues 21-36 (EISAKMDSRDSPMIQE) is cleaved from the precursor. Cystine bridges form between Cys39-Cys56, Cys46-Cys59, and Cys55-Cys64.

This sequence belongs to the neurotoxin 36 family. 02 subfamily. Expressed by the venom gland.

It localises to the secreted. Possesses strong antiplasmodial activity against the intra-erythrocyte stage of P.falciparum in vitro. IC(50) for inhibiting P.falciparum growth is 1.15 uM. Specifically interacts with infected erythrocytes. Does not lyse erythrocytes, is not cytotoxic to nucleated mammalian cells, and does not inhibit neuromuscular function. Has neither antibacterial nor antifungal activity. This chain is U2-theraphotoxin-Pc1a, found in Psalmopoeus cambridgei (Trinidad chevron tarantula).